The sequence spans 189 residues: MAFPTAEEITQRVQQIVGPRGLDVEKVDIKKAGAKSAVIIRIDGDQRPDLDVIEELSDEISRNFDAAESDGELNFGAGYRLEVSTPGFDEPLLAARHFRRQRGHIATFVLNQADDEHATANAANARFVARVGALNADETELAVVLPGKKEPSVKTYPLDQIREAKLEVEFSTPPEAEMSLVNTPFDQLG.

This sequence belongs to the RimP family.

The protein resides in the cytoplasm. Functionally, required for maturation of 30S ribosomal subunits. This Corynebacterium kroppenstedtii (strain DSM 44385 / JCM 11950 / CIP 105744 / CCUG 35717) protein is Ribosome maturation factor RimP.